The following is a 577-amino-acid chain: Proline--tRNA ligase (577 aa).

This sequence belongs to the class-II aminoacyl-tRNA synthetase family. ProS type 1 subfamily. As to quaternary structure, homodimer.

Its subcellular location is the cytoplasm. It carries out the reaction tRNA(Pro) + L-proline + ATP = L-prolyl-tRNA(Pro) + AMP + diphosphate. Its function is as follows. Catalyzes the attachment of proline to tRNA(Pro) in a two-step reaction: proline is first activated by ATP to form Pro-AMP and then transferred to the acceptor end of tRNA(Pro). As ProRS can inadvertently accommodate and process non-cognate amino acids such as alanine and cysteine, to avoid such errors it has two additional distinct editing activities against alanine. One activity is designated as 'pretransfer' editing and involves the tRNA(Pro)-independent hydrolysis of activated Ala-AMP. The other activity is designated 'posttransfer' editing and involves deacylation of mischarged Ala-tRNA(Pro). The misacylated Cys-tRNA(Pro) is not edited by ProRS. The polypeptide is Proline--tRNA ligase (Thermotoga maritima (strain ATCC 43589 / DSM 3109 / JCM 10099 / NBRC 100826 / MSB8)).